We begin with the raw amino-acid sequence, 117 residues long: Large ribosomal subunit protein uL18 (117 aa).

Belongs to the universal ribosomal protein uL18 family. As to quaternary structure, part of the 50S ribosomal subunit; part of the 5S rRNA/L5/L18/L25 subcomplex. Contacts the 5S and 23S rRNAs.

This is one of the proteins that bind and probably mediate the attachment of the 5S RNA into the large ribosomal subunit, where it forms part of the central protuberance. The protein is Large ribosomal subunit protein uL18 of Laribacter hongkongensis (strain HLHK9).